Consider the following 128-residue polypeptide: Large ribosomal subunit protein uL22 (128 aa).

The protein belongs to the universal ribosomal protein uL22 family. Part of the 50S ribosomal subunit.

Functionally, this protein binds specifically to 23S rRNA; its binding is stimulated by other ribosomal proteins, e.g. L4, L17, and L20. It is important during the early stages of 50S assembly. It makes multiple contacts with different domains of the 23S rRNA in the assembled 50S subunit and ribosome. In terms of biological role, the globular domain of the protein is located near the polypeptide exit tunnel on the outside of the subunit, while an extended beta-hairpin is found that lines the wall of the exit tunnel in the center of the 70S ribosome. The polypeptide is Large ribosomal subunit protein uL22 (Prochlorococcus marinus subsp. pastoris (strain CCMP1986 / NIES-2087 / MED4)).